A 446-amino-acid chain; its full sequence is Signal recognition particle protein (446 aa).

GTP-binding positions include 106–113 (GLQGSGKT), 188–192 (DTAGR), and 246–249 (SKLD).

Belongs to the GTP-binding SRP family. SRP54 subfamily. In terms of assembly, part of the signal recognition particle protein translocation system, which is composed of SRP and FtsY.

The protein resides in the cytoplasm. The catalysed reaction is GTP + H2O = GDP + phosphate + H(+). Its function is as follows. Involved in targeting and insertion of nascent membrane proteins into the cytoplasmic membrane. Binds to the hydrophobic signal sequence of the ribosome-nascent chain (RNC) as it emerges from the ribosomes. The SRP-RNC complex is then targeted to the cytoplasmic membrane where it interacts with the SRP receptor FtsY. The sequence is that of Signal recognition particle protein from Mycoplasma genitalium (strain ATCC 33530 / DSM 19775 / NCTC 10195 / G37) (Mycoplasmoides genitalium).